A 914-amino-acid chain; its full sequence is Beta-mannosidase A (914 aa).

An N-terminal signal peptide occupies residues 1–20; the sequence is MRFTATAAALVASSIPATLG. N-linked (GlcNAc...) asparagine glycosylation is found at Asn-39, Asn-79, Asn-230, Asn-265, Asn-299, Asn-309, and Asn-330. The active-site Proton donor is the Glu-462. N-linked (GlcNAc...) asparagine glycosylation is found at Asn-591, Asn-614, Asn-641, Asn-721, Asn-744, Asn-773, Asn-784, and Asn-909.

It belongs to the glycosyl hydrolase 2 family. Beta-mannosidase A subfamily. As to quaternary structure, homodimer.

Its subcellular location is the secreted. It catalyses the reaction Hydrolysis of terminal, non-reducing beta-D-mannose residues in beta-D-mannosides.. It functions in the pathway glycan metabolism; N-glycan degradation. In terms of biological role, exoglycosidase that cleaves the single beta-linked mannose residue from the non-reducing end of beta-mannosidic oligosaccharides of various complexity and length. Involved in the degradation of polymeric mannan and galactomannan. In Aspergillus flavus (strain ATCC 200026 / FGSC A1120 / IAM 13836 / NRRL 3357 / JCM 12722 / SRRC 167), this protein is Beta-mannosidase A (mndA).